We begin with the raw amino-acid sequence, 360 residues long: Probable dual-specificity RNA methyltransferase RlmN (360 aa).

Glu-91 serves as the catalytic Proton acceptor. One can recognise a Radical SAM core domain in the interval 97–335 (QHYGQSVCVT…CVVRQEHGTD (239 aa)). Cys-104 and Cys-340 are joined by a disulfide. The [4Fe-4S] cluster site is built by Cys-111, Cys-115, and Cys-118. Residues 163-164 (GE), Ser-195, 218-220 (SLH), and Asn-296 contribute to the S-adenosyl-L-methionine site. Cys-340 serves as the catalytic S-methylcysteine intermediate.

It belongs to the radical SAM superfamily. RlmN family. [4Fe-4S] cluster serves as cofactor.

The protein localises to the cytoplasm. The catalysed reaction is adenosine(2503) in 23S rRNA + 2 reduced [2Fe-2S]-[ferredoxin] + 2 S-adenosyl-L-methionine = 2-methyladenosine(2503) in 23S rRNA + 5'-deoxyadenosine + L-methionine + 2 oxidized [2Fe-2S]-[ferredoxin] + S-adenosyl-L-homocysteine. It catalyses the reaction adenosine(37) in tRNA + 2 reduced [2Fe-2S]-[ferredoxin] + 2 S-adenosyl-L-methionine = 2-methyladenosine(37) in tRNA + 5'-deoxyadenosine + L-methionine + 2 oxidized [2Fe-2S]-[ferredoxin] + S-adenosyl-L-homocysteine. Functionally, specifically methylates position 2 of adenine 2503 in 23S rRNA and position 2 of adenine 37 in tRNAs. This chain is Probable dual-specificity RNA methyltransferase RlmN, found in Streptococcus equi subsp. equi (strain 4047).